The chain runs to 388 residues: Regulator of G-protein signaling 20 (388 aa).

Residues 138–199 (PGRPSGGRPL…TPGAAPGQPG (62 aa)) are disordered. The span at 185-197 (PAAQDTPGAAPGQ) shows a compositional bias: low complexity. Residues 262-378 (SFDKLMVTPA…MNSAVYKDLL (117 aa)) form the RGS domain.

In terms of assembly, forms a complex with G(alpha)z/i2 subunits and mu-opioid receptors; the formation of this complex results in mu-opioid receptor desensitization. Interacts with OPRM1. In terms of processing, fatty acylated. Heavily palmitoylated in the cysteine string motif. Post-translationally, N- and O-glycosylated in synapsomal membranes. Serine phosphorylated in synapsomal membranes. In terms of processing, sumoylated with SUMO1 and SUMO2 in synaptosomes. The sumoylated forms act as a scaffold for sequestering mu-opioid receptor-activated G(alpha) subunits. In terms of tissue distribution, isoform 5 is expressed in brain at high levels in the caudate nucleus and temporal lobe.

It localises to the membrane. The protein localises to the nucleus. Its subcellular location is the cytoplasm. Inhibits signal transduction by increasing the GTPase activity of G protein alpha subunits thereby driving them into their inactive GDP-bound form. Binds selectively to G(z)-alpha and G(alpha)-i2 subunits, accelerates their GTPase activity and regulates their signaling activities. The G(z)-alpha activity is inhibited by the phosphorylation and palmitoylation of the G-protein. Negatively regulates mu-opioid receptor-mediated activation of the G-proteins. This chain is Regulator of G-protein signaling 20 (RGS20), found in Homo sapiens (Human).